A 678-amino-acid polypeptide reads, in one-letter code: Glycine--tRNA ligase beta subunit (678 aa).

It belongs to the class-II aminoacyl-tRNA synthetase family. Tetramer of two alpha and two beta subunits.

It localises to the cytoplasm. It catalyses the reaction tRNA(Gly) + glycine + ATP = glycyl-tRNA(Gly) + AMP + diphosphate. The chain is Glycine--tRNA ligase beta subunit from Streptococcus pneumoniae (strain ATCC 700669 / Spain 23F-1).